Here is a 108-residue protein sequence, read N- to C-terminus: Thioredoxin C-2 (108 aa).

Residues 2–108 (SATIVNTTDE…KLAAFIDQNI (107 aa)) enclose the Thioredoxin domain. The cysteines at positions 33 and 36 are disulfide-linked.

The protein belongs to the thioredoxin family.

Participates in various redox reactions through the reversible oxidation of its active center dithiol to a disulfide and catalyzes dithiol-disulfide exchange reactions. The protein is Thioredoxin C-2 of Corynebacterium nephridii.